Consider the following 341-residue polypeptide: Biotin synthase (341 aa).

One can recognise a Radical SAM core domain in the interval 40-267 (AEIQVSTLLS…RSMVRLSAGR (228 aa)). [4Fe-4S] cluster is bound by residues cysteine 55, cysteine 59, and cysteine 62. [2Fe-2S] cluster is bound by residues cysteine 99, cysteine 130, cysteine 190, and arginine 262.

It belongs to the radical SAM superfamily. Biotin synthase family. Homodimer. It depends on [4Fe-4S] cluster as a cofactor. [2Fe-2S] cluster is required as a cofactor.

The catalysed reaction is (4R,5S)-dethiobiotin + (sulfur carrier)-SH + 2 reduced [2Fe-2S]-[ferredoxin] + 2 S-adenosyl-L-methionine = (sulfur carrier)-H + biotin + 2 5'-deoxyadenosine + 2 L-methionine + 2 oxidized [2Fe-2S]-[ferredoxin]. It functions in the pathway cofactor biosynthesis; biotin biosynthesis; biotin from 7,8-diaminononanoate: step 2/2. Catalyzes the conversion of dethiobiotin (DTB) to biotin by the insertion of a sulfur atom into dethiobiotin via a radical-based mechanism. The polypeptide is Biotin synthase (Xylella fastidiosa (strain M12)).